A 917-amino-acid polypeptide reads, in one-letter code: Outer kinetochore KNL1 complex subunit SPC105 (917 aa).

Residues Met-1 to Gly-17 are compositionally biased toward basic and acidic residues. Residues Met-1–Asn-38 are disordered. Positions Lys-24 to Leu-36 are enriched in polar residues. Ser-77 is subject to Phosphoserine. 3 disordered regions span residues Gln-93–Thr-172, Thr-235–Glu-282, and His-324–Lys-343. The span at Ser-106–Ile-126 shows a compositional bias: polar residues. Over residues Asp-127–Ala-137 the composition is skewed to basic and acidic residues. The MELT motif lies at Met-146 to Thr-149. A Phosphothreonine; by MPS1 modification is found at Thr-149. Over residues Pro-156–Glu-170 the composition is skewed to polar residues. Residues Asp-165–Asn-183 are interacts with the BUB1-BUB3 complex. 2 consecutive short sequence motifs (MELT; degenerate) follow at residues Met-169 to Thr-172 and Ile-232 to Thr-235. 2 positions are modified to phosphothreonine; by MPS1: Thr-172 and Thr-235. Residues Asn-245–Tyr-257 are compositionally biased toward polar residues. 2 stretches are compositionally biased toward basic and acidic residues: residues Ser-258–Asn-273 and His-324–Ala-335. Thr-356 is modified (phosphothreonine). Ser-380 carries the post-translational modification Phosphoserine. Residues Asp-397 to Gly-427 are disordered. The segment covering Thr-414–Asp-424 has biased composition (acidic residues). The interval Pro-507 to Asn-638 is required for interaction with KRE28. The stretch at Glu-591–Ala-628 forms a coiled coil.

Component of the KNL1/SPC105 complex composed of SPC105 and KRE28. Part of the outer kinetochore KMN network that includes the KNL1, MIS12 and NDC80 complexes. Interacts (via phosphorylated MELT motifs) with BUB1 and BUB3 in the BUB1-BUB3 complex; the interaction is direct. Interacts with the MIS12 complex subunits MTW1 (via C-terminus) and NSL1 (via C-terminus). Interacts with the NDC80 complex subunits SPC24 and SPC25. Interacts with CNN1 (via N-terminus).

It is found in the nucleus. It localises to the chromosome. The protein localises to the centromere. The protein resides in the kinetochore. Its function is as follows. Acts as a component of the outer kinetochore KNL1 complex that serves as a docking point for spindle assembly checkpoint components and mediates microtubule-kinetochore interactions. Kinetochores, consisting of a centromere-associated inner segment and a microtubule-contacting outer segment, play a crucial role in chromosome segregation by mediating the physical connection between centromeric DNA and spindle microtubules. The outer kinetochore is made up of the ten-subunit KMN network, comprising the MIS12, NDC80 and KNL1 complexes, and auxiliary microtubule-associated components; together they connect the outer kinetochore with the inner kinetochore, bind microtubules, and mediate interactions with mitotic checkpoint proteins that delay anaphase until chromosomes are bioriented on the spindle. Recruits the BUB1-BUB3 complex to kinetochores when phosphorylated by MPS1, to support spindle assembly checkpoint signaling; the effect is reversed by protein phosphatase 1 (PP1). The KNL1 complex is required for kinetochore binding by the kMAPs (kinetochore-bound microtubule-associated proteins) BIM1, BIK1 and SLK19, and motors CIN8 and KAR3. This Saccharomyces cerevisiae (strain ATCC 204508 / S288c) (Baker's yeast) protein is Outer kinetochore KNL1 complex subunit SPC105 (SPC105).